A 310-amino-acid polypeptide reads, in one-letter code: Thymidine kinase (310 aa).

17-24 lines the ATP pocket; sequence GPFGIGKT. Glu-45 (proton acceptor) is an active-site residue. Gln-86 lines the substrate pocket. Arg-176 serves as a coordination point for ATP. Arg-182 contributes to the substrate binding site.

This sequence belongs to the herpesviridae thymidine kinase family. As to quaternary structure, homodimer.

The enzyme catalyses thymidine + ATP = dTMP + ADP + H(+). In terms of biological role, catalyzes the transfer of the gamma-phospho group of ATP to thymidine to generate dTMP in the salvage pathway of pyrimidine synthesis. The dTMP serves as a substrate for DNA polymerase during viral DNA replication. Allows the virus to be reactivated and to grow in non-proliferative cells lacking a high concentration of phosphorylated nucleic acid precursors. The sequence is that of Thymidine kinase from Gallus gallus (Chicken).